We begin with the raw amino-acid sequence, 84 residues long: Cell division topological specificity factor (84 aa).

Belongs to the MinE family.

Functionally, prevents the cell division inhibition by proteins MinC and MinD at internal division sites while permitting inhibition at polar sites. This ensures cell division at the proper site by restricting the formation of a division septum at the midpoint of the long axis of the cell. This Cupriavidus pinatubonensis (strain JMP 134 / LMG 1197) (Cupriavidus necator (strain JMP 134)) protein is Cell division topological specificity factor.